The sequence spans 205 residues: Ribonuclease HII (205 aa).

In terms of domain architecture, RNase H type-2 spans 14–205; it reads SLISGIDEAG…SFRLKQLGEK (192 aa). A divalent metal cation is bound by residues aspartate 20, glutamate 21, and aspartate 117.

This sequence belongs to the RNase HII family. The cofactor is Mn(2+). It depends on Mg(2+) as a cofactor.

It localises to the cytoplasm. It catalyses the reaction Endonucleolytic cleavage to 5'-phosphomonoester.. Functionally, endonuclease that specifically degrades the RNA of RNA-DNA hybrids. The polypeptide is Ribonuclease HII (Chlorobium phaeobacteroides (strain DSM 266 / SMG 266 / 2430)).